A 159-amino-acid chain; its full sequence is Lipoprotein signal peptidase (159 aa).

Transmembrane regions (helical) follow at residues 64 to 84 (SVQW…IWVV) and 89 to 109 (PPFW…GNGI). Catalysis depends on residues Asp-119 and Asp-135. The chain crosses the membrane as a helical span at residues 130 to 150 (IFNPADIAINLAVLCFLVDLW).

It belongs to the peptidase A8 family.

Its subcellular location is the cell inner membrane. The enzyme catalyses Release of signal peptides from bacterial membrane prolipoproteins. Hydrolyzes -Xaa-Yaa-Zaa-|-(S,diacylglyceryl)Cys-, in which Xaa is hydrophobic (preferably Leu), and Yaa (Ala or Ser) and Zaa (Gly or Ala) have small, neutral side chains.. Its pathway is protein modification; lipoprotein biosynthesis (signal peptide cleavage). Its function is as follows. This protein specifically catalyzes the removal of signal peptides from prolipoproteins. The polypeptide is Lipoprotein signal peptidase (Parasynechococcus marenigrum (strain WH8102)).